A 107-amino-acid chain; its full sequence is Large ribosomal subunit protein uL24 (107 aa).

It belongs to the universal ribosomal protein uL24 family. In terms of assembly, part of the 50S ribosomal subunit.

In terms of biological role, one of two assembly initiator proteins, it binds directly to the 5'-end of the 23S rRNA, where it nucleates assembly of the 50S subunit. Functionally, one of the proteins that surrounds the polypeptide exit tunnel on the outside of the subunit. The chain is Large ribosomal subunit protein uL24 from Kosmotoga olearia (strain ATCC BAA-1733 / DSM 21960 / TBF 19.5.1).